A 140-amino-acid chain; its full sequence is Large ribosomal subunit protein uL11 (140 aa).

The protein belongs to the universal ribosomal protein uL11 family. Part of the ribosomal stalk of the 50S ribosomal subunit. Interacts with L10 and the large rRNA to form the base of the stalk. L10 forms an elongated spine to which L12 dimers bind in a sequential fashion forming a multimeric L10(L12)X complex. In terms of processing, one or more lysine residues are methylated.

Its function is as follows. Forms part of the ribosomal stalk which helps the ribosome interact with GTP-bound translation factors. This is Large ribosomal subunit protein uL11 from Thermoanaerobacter pseudethanolicus (strain ATCC 33223 / 39E) (Clostridium thermohydrosulfuricum).